Reading from the N-terminus, the 300-residue chain is Mitochondrial GTP/GDP carrier protein 1 (300 aa).

Solcar repeat units lie at residues Q8–F108, G117–Y198, and A208–R293. Transmembrane regions (helical) follow at residues L14–I34, Q85–N101, S122–L142, G173–F189, F214–I234, and G268–A285.

The protein belongs to the mitochondrial carrier (TC 2.A.29) family.

The protein localises to the mitochondrion inner membrane. Functionally, mitochondrial GTP/GDP transporter required for GTP uptake and GDP exit from mitochondria. Involved in mitochondrial iron transport and essential for mitochondrial genome maintenance. The polypeptide is Mitochondrial GTP/GDP carrier protein 1 (GGC1) (Saccharomyces cerevisiae (strain ATCC 204508 / S288c) (Baker's yeast)).